The following is a 298-amino-acid chain: Cytosolic Fe-S cluster assembly factor CFD1 (298 aa).

Position 25 to 32 (25 to 32) interacts with ATP; sequence GKGGVGKS. [4Fe-4S] cluster-binding residues include C215 and C218.

This sequence belongs to the Mrp/NBP35 ATP-binding proteins family. NUBP2/CFD1 subfamily. In terms of assembly, heterotetramer of 2 NBP35 and 2 CFD1 chains. [4Fe-4S] cluster serves as cofactor.

It localises to the cytoplasm. In terms of biological role, component of the cytosolic iron-sulfur (Fe/S) protein assembly (CIA) machinery. Required for maturation of extramitochondrial Fe-S proteins. The NBP35-CFD1 heterotetramer forms a Fe-S scaffold complex, mediating the de novo assembly of an Fe-S cluster and its transfer to target apoproteins. Required for biogenesis and export of both ribosomal subunits, which may reflect a role in assembly of the Fe/S clusters in RLI1, a protein which performs rRNA processing and ribosome export. In Debaryomyces hansenii (strain ATCC 36239 / CBS 767 / BCRC 21394 / JCM 1990 / NBRC 0083 / IGC 2968) (Yeast), this protein is Cytosolic Fe-S cluster assembly factor CFD1.